The following is a 306-amino-acid chain: Pantothenate kinase (306 aa).

91-98 contributes to the ATP binding site; that stretch reads GSVAVGKS.

The protein belongs to the prokaryotic pantothenate kinase family.

The protein resides in the cytoplasm. The catalysed reaction is (R)-pantothenate + ATP = (R)-4'-phosphopantothenate + ADP + H(+). Its pathway is cofactor biosynthesis; coenzyme A biosynthesis; CoA from (R)-pantothenate: step 1/5. This is Pantothenate kinase from Streptococcus thermophilus (strain CNRZ 1066).